The chain runs to 510 residues: Cytochrome P450 703A2 (510 aa).

The helical transmembrane segment at 2–22 (ILVLASLFAVLILNVLLWRWL) threads the bilayer. Cys-451 is a binding site for heme.

Belongs to the cytochrome P450 family. Requires heme as cofactor.

Its subcellular location is the membrane. The catalysed reaction is dodecanoate + reduced [NADPH--hemoprotein reductase] + O2 = 7-hydroxydodecanoate + oxidized [NADPH--hemoprotein reductase] + H2O + H(+). Functionally, involved in pollen wall development. Catalyzes the conversion of medium-chain saturated fatty acids to the corresponding monohydroxylated fatty acids, with a preferential hydroxylation of lauric acid at the C-7 position. In-chain hydroxylated fatty acids, together with omega-hydroxylated fatty acids, are key monomeric aliphatic building blocks for sporopollenin synthesis during exine formation. This is Cytochrome P450 703A2 from Arabidopsis thaliana (Mouse-ear cress).